The chain runs to 205 residues: Large ribosomal subunit protein bL21 (205 aa).

A disordered region spans residues 107–137 (APAKKAAAKKEEAPKADTAPKAAAAPTEEAA). Residues 122 to 137 (ADTAPKAAAAPTEEAA) are compositionally biased toward low complexity.

Belongs to the bacterial ribosomal protein bL21 family. Part of the 50S ribosomal subunit. Contacts protein L20.

In terms of biological role, this protein binds to 23S rRNA in the presence of protein L20. This chain is Large ribosomal subunit protein bL21, found in Hyphomonas neptunium (strain ATCC 15444).